Consider the following 85-residue polypeptide: Large ribosomal subunit protein bL27 (85 aa).

The tract at residues M1 to R20 is disordered.

It belongs to the bacterial ribosomal protein bL27 family.

The protein is Large ribosomal subunit protein bL27 of Haemophilus influenzae (strain ATCC 51907 / DSM 11121 / KW20 / Rd).